A 95-amino-acid chain; its full sequence is Acylphosphatase (95 aa).

The Acylphosphatase-like domain occupies 10–95 (CIHVTVSGKV…VEDYSDFRVR (86 aa)). Residues R25 and N43 contribute to the active site.

The protein belongs to the acylphosphatase family.

The catalysed reaction is an acyl phosphate + H2O = a carboxylate + phosphate + H(+). The polypeptide is Acylphosphatase (acyP) (Coxiella burnetii (strain RSA 493 / Nine Mile phase I)).